Reading from the N-terminus, the 316-residue chain is Acetyl-coenzyme A carboxylase carboxyl transferase subunit alpha (316 aa).

The CoA carboxyltransferase C-terminal domain maps to 39-293 (KLEEKNAQLT…KKHLQANLTN (255 aa)).

This sequence belongs to the AccA family. Acetyl-CoA carboxylase is a heterohexamer composed of biotin carboxyl carrier protein (AccB), biotin carboxylase (AccC) and two subunits each of ACCase subunit alpha (AccA) and ACCase subunit beta (AccD).

The protein resides in the cytoplasm. The enzyme catalyses N(6)-carboxybiotinyl-L-lysyl-[protein] + acetyl-CoA = N(6)-biotinyl-L-lysyl-[protein] + malonyl-CoA. It functions in the pathway lipid metabolism; malonyl-CoA biosynthesis; malonyl-CoA from acetyl-CoA: step 1/1. In terms of biological role, component of the acetyl coenzyme A carboxylase (ACC) complex. First, biotin carboxylase catalyzes the carboxylation of biotin on its carrier protein (BCCP) and then the CO(2) group is transferred by the carboxyltransferase to acetyl-CoA to form malonyl-CoA. The polypeptide is Acetyl-coenzyme A carboxylase carboxyl transferase subunit alpha (Coxiella burnetii (strain RSA 331 / Henzerling II)).